The sequence spans 1200 residues: Nuclear envelope pore membrane protein POM 121 (1200 aa).

A disordered region spans residues 1-29 (MSPAAAAADGGERRRPPLGGREGRSRARG). The tract at residues 1–56 (MSPAAAAADGGERRRPPLGGREGRSRARGYGGPAGAAALGLALLGLALYLVPAAAA) is cisternal side. Residues 10–25 (GGERRRPPLGGREGRS) are compositionally biased toward basic and acidic residues. Residues 57–77 (LAWLAVGASAAWWGLSREPRG) form a helical membrane-spanning segment. Residues 76 to 1200 (RGPRALSSFV…QARRQHTRKK (1125 aa)) form a pore side region. S83 is modified (phosphoserine). Disordered stretches follow at residues 91–167 (HPRP…SAVQ) and 177–196 (PTPL…GPLS). The span at 143–152 (LRQDPRERPG) shows a compositional bias: basic and acidic residues. S244 carries the phosphoserine modification. Disordered stretches follow at residues 294-328 (KKKR…SAFE), 345-509 (SLKR…ITAE), 530-627 (PDDA…SDSK), 640-692 (SITP…LATP), 706-744 (PATP…PTFK), 1075-1151 (TSGT…SSLS), and 1173-1200 (PSFS…TRKK). Over residues 298-312 (TVAEEDQLHLDGQEN) the composition is skewed to basic and acidic residues. Residues S319, S322, S325, S345, S355, S367, and S370 each carry the phosphoserine modification. A compositionally biased stretch (low complexity) spans 365 to 374 (TSSVSSLASA). Residues 379–397 (IPSSSRNAITSSYSSTRGI) show a composition bias toward polar residues. Over residues 404-419 (SGPTSSPFSSPASSRS) the composition is skewed to low complexity. A phosphoserine mark is found at S408, S409, S412, S413, S416, and S417. Basic and acidic residues-rich tracts occupy residues 424-433 (RPAKKTREEE) and 446-456 (TDKESPGEKVT). Low complexity-rich tracts occupy residues 463-477 (QQSS…GSSG), 546-574 (PPFT…PLLE), 581-598 (ESPA…TVAA), and 605-621 (PSLL…PLAS). Positions 640–657 (SITPLTDSKSSGVSQAEQ) are enriched in polar residues. Composition is skewed to low complexity over residues 658-669 (SVSTPASTASSP), 681-692 (SPPASSSSLATP), 715-742 (SPLP…TTPT), and 1075-1099 (TSGT…GSLS). The segment covering 1100-1121 (QNTLGAPSQGSPFAFSVGSTPE) has biased composition (polar residues). A compositionally biased stretch (basic residues) spans 1190-1200 (LQARRQHTRKK).

The protein belongs to the POM121 family. Proteolytically cleaved by caspase-3 during apoptosis.

The protein localises to the nucleus. The protein resides in the nuclear pore complex. It is found in the nucleus membrane. It localises to the endoplasmic reticulum membrane. Essential component of the nuclear pore complex (NPC). The repeat-containing domain may be involved in anchoring components of the pore complex to the pore membrane. When overexpressed in cells induces the formation of cytoplasmic annulate lamellae (AL). This is Nuclear envelope pore membrane protein POM 121 (Pom121) from Mus musculus (Mouse).